We begin with the raw amino-acid sequence, 736 residues long: Elongation factor 2 (736 aa).

The tr-type G domain maps to 18-261; that stretch reads EQVRNIGITA…MVVKFIPNPR (244 aa). Residues 27-34, 93-97, and 147-150 each bind GTP; these read AHVDHGKT, DTPGH, and NKVD. His-602 bears the Diphthamide mark.

The protein belongs to the TRAFAC class translation factor GTPase superfamily. Classic translation factor GTPase family. EF-G/EF-2 subfamily.

It localises to the cytoplasm. Its function is as follows. Catalyzes the GTP-dependent ribosomal translocation step during translation elongation. During this step, the ribosome changes from the pre-translocational (PRE) to the post-translocational (POST) state as the newly formed A-site-bound peptidyl-tRNA and P-site-bound deacylated tRNA move to the P and E sites, respectively. Catalyzes the coordinated movement of the two tRNA molecules, the mRNA and conformational changes in the ribosome. This is Elongation factor 2 from Staphylothermus marinus (strain ATCC 43588 / DSM 3639 / JCM 9404 / F1).